Reading from the N-terminus, the 68-residue chain is MLFKSYVYFLAGLLLVGLFTSCDADAQYEELVPGFFRKGGVSGVGDYKPIVVFGKSFNQFEAAEGAKG.

The N-terminal stretch at 1–24 (MLFKSYVYFLAGLLLVGLFTSCDA) is a signal peptide. The propeptide occupies 25–38 (DAQYEELVPGFFRK).

Expressed in salivary glands.

Its subcellular location is the secreted. In terms of biological role, horsefly salivary gland immunosuppressant protein that likely inhibits the host inflammatory response by regulation of anti- and pro-inflammatory cytokines. When tested on mouse splenocytes in the presence of LPS, it increases the secretion of the proinflammatory cytokine interleukin-10 (IL10) and decreases the secretion of the proinflammatory cytokine interferon-gamma (IFNG) in a dose-dependent manner. The sequence is that of Tabimmunregulin 12 from Tabanus yao (Horsefly).